A 388-amino-acid chain; its full sequence is Salivary protein Tsal2A (388 aa).

A signal peptide spans 1–18 (MSLLYGLLILAFTRSCLV). Residue Asn-260 is glycosylated (N-linked (GlcNAc...) asparagine).

This sequence belongs to the DNA/RNA non-specific endonuclease family. A divalent metal cation serves as cofactor. Saliva (at protein level).

The protein resides in the secreted. Its function is as follows. Binds double-stranded DNA (dsDNA) with high affinity. Binds double-stranded RNA. Binds single-stranded DNA with lower affinity and with a preference for purine-rich sequences. Shows residual nuclease activity for dsDNA. Facilitates blood meal intake by lowering the local viscosity created by the release of host DNA. In Glossina morsitans morsitans (Savannah tsetse fly), this protein is Salivary protein Tsal2A.